A 214-amino-acid chain; its full sequence is Germin-like protein (214 aa).

Positions 1-22 (MVMMRIFFFLFLLAFPVFTANA) are cleaved as a signal peptide. Cysteine 28 and cysteine 44 are oxidised to a cystine. Residues 58 to 204 (SGLAKPGNTT…TTCLDEATIK (147 aa)) form the Cupin type-1 domain. Residues histidine 106, histidine 108, and glutamate 113 each contribute to the Mn(2+) site.

It belongs to the germin family. In terms of assembly, oligomer (believed to be a pentamer but probably hexamer). In terms of tissue distribution, cotyledons and leaves.

Its subcellular location is the secreted. It is found in the extracellular space. It localises to the apoplast. This chain is Germin-like protein (GLP), found in Ipomoea nil (Japanese morning glory).